Reading from the N-terminus, the 218-residue chain is Probable septum site-determining protein MinC (218 aa).

This sequence belongs to the MinC family. Interacts with MinD and FtsZ.

Its function is as follows. Cell division inhibitor that blocks the formation of polar Z ring septums. Rapidly oscillates between the poles of the cell to destabilize FtsZ filaments that have formed before they mature into polar Z rings. Prevents FtsZ polymerization. This chain is Probable septum site-determining protein MinC, found in Kosmotoga olearia (strain ATCC BAA-1733 / DSM 21960 / TBF 19.5.1).